Consider the following 324-residue polypeptide: MTYWTSEDNVAGKPGTALFIILPTIGCYRYRIGQACYMCSYPTAAPKVKWTQEAIVNYVKEALEKIEGTEGPFAVRMFTSGSFLDNGELKPETRRKIFEILAEMDNVEEIVIESRSELVRYEAVKELAEIVPDKHFEVAIGLETANDDVADVSINKGNTFADFVKAAEITHKAGAKVKTYLLLKPIFLSERDGVEDAKESIIKAEPYTDTFSINITDIQKGTLYERLWEKKEYRPPWLWSAVEVLIWAKRKFPNKRILSDPVGAGSKRGPHNCLTDYDRVIGKAIKKFSATQDLSYIENLKPECRDRWEYIVENGLLDWQLVTW.

One can recognise a Radical SAM core domain in the interval 12–254 (GKPGTALFII…LIWAKRKFPN (243 aa)). [4Fe-4S] cluster-binding residues include Cys27, Cys36, and Cys39.

Belongs to the radical SAM superfamily. RaSEA family. Forms a robust complex with the archaeosine synthase alpha subunit ArcS, likely an alpha(2)beta(2) heterotetrameric structure. [4Fe-4S] cluster serves as cofactor.

It catalyses the reaction 7-N-[(5S)-5-amino-5-carboxypentyl]formamidino-7-deazaguanosine(15) in tRNA + S-adenosyl-L-methionine = archaeosine(15) in tRNA + L-1-piperideine-6-carboxylate + 5'-deoxyadenosine + L-methionine + 2 H(+). Its pathway is tRNA modification; archaeosine-tRNA biosynthesis. In terms of biological role, radical SAM enzyme involved in the synthesis of archaeosine, a modified nucleoside present in the dihydrouridine loop (D-loop) of archaeal tRNAs. Catalyzes the cleavage of the C(epsilon)-N bond of the lysine moiety of q0kN15-tRNA, leading to the formation of archaeosine at position 15 in tRNAs. In Thermococcus kodakarensis (strain ATCC BAA-918 / JCM 12380 / KOD1) (Pyrococcus kodakaraensis (strain KOD1)), this protein is Archaeosine synthase subunit beta.